A 957-amino-acid chain; its full sequence is Glycine dehydrogenase (decarboxylating) (957 aa).

An N6-(pyridoxal phosphate)lysine modification is found at lysine 708.

The protein belongs to the GcvP family. In terms of assembly, the glycine cleavage system is composed of four proteins: P, T, L and H. Pyridoxal 5'-phosphate serves as cofactor.

It carries out the reaction N(6)-[(R)-lipoyl]-L-lysyl-[glycine-cleavage complex H protein] + glycine + H(+) = N(6)-[(R)-S(8)-aminomethyldihydrolipoyl]-L-lysyl-[glycine-cleavage complex H protein] + CO2. Its function is as follows. The glycine cleavage system catalyzes the degradation of glycine. The P protein binds the alpha-amino group of glycine through its pyridoxal phosphate cofactor; CO(2) is released and the remaining methylamine moiety is then transferred to the lipoamide cofactor of the H protein. The chain is Glycine dehydrogenase (decarboxylating) from Cronobacter sakazakii (strain ATCC BAA-894) (Enterobacter sakazakii).